Consider the following 212-residue polypeptide: MRTLWDITPAVDTATPVWPGDTPVGIERVWRMEAGSPVNVARLTLSPHTGAHTDAPLHYDAEGAAIGDVPLDAYLGRCRVIHCIGASPVVTPQHLTGSLDDLPPRVLLRTYRNAPTNVWDSAFCAVAPDTIDLLASRGVKLIGIDTPSLDPQESKTMDAHHRIRAHRMAILEGIVLDEVAAGDYELIALPLKLTTLDASPVRAILRALPESH.

W18 provides a ligand contact to substrate. Residues H48, H52, and D54 each coordinate Zn(2+). The active-site Proton donor/acceptor is the H58. H160 and E172 together coordinate Zn(2+).

It belongs to the Cyclase 1 superfamily. KynB family. Homodimer. The cofactor is Zn(2+).

It carries out the reaction N-formyl-L-kynurenine + H2O = L-kynurenine + formate + H(+). It participates in amino-acid degradation; L-tryptophan degradation via kynurenine pathway; L-kynurenine from L-tryptophan: step 2/2. Catalyzes the hydrolysis of N-formyl-L-kynurenine to L-kynurenine, the second step in the kynurenine pathway of tryptophan degradation. The protein is Kynurenine formamidase of Paraburkholderia xenovorans (strain LB400).